A 217-amino-acid chain; its full sequence is Oxygen regulatory protein NreC (217 aa).

The 118-residue stretch at 2 to 119 (KIVIADDHAV…QLLLAIRTVY (118 aa)) folds into the Response regulatory domain. D53 is modified (4-aspartylphosphate). Residues 148–213 (TTDPFKILSK…ELVEYALKKK (66 aa)) enclose the HTH luxR-type domain. The H-T-H motif DNA-binding region spans 172–191 (NKEIAEKLFVSVKTVEAHKT).

Phosphorylated by NreB.

Its subcellular location is the cytoplasm. Its function is as follows. Member of the two-component regulatory system NreB/NreC involved in the control of dissimilatory nitrate/nitrite reduction in response to oxygen. Phosphorylated NreC binds to a GC-rich palindromic sequence at the promoters of the nitrate (narGHJI) and nitrite (nir) reductase operons, as well as the putative nitrate transporter gene narT, and activates their expression. This Staphylococcus aureus (strain USA300 / TCH1516) protein is Oxygen regulatory protein NreC (nreC).